The sequence spans 171 residues: Large ribosomal subunit protein bL9 (171 aa).

It belongs to the bacterial ribosomal protein bL9 family.

Functionally, binds to the 23S rRNA. The protein is Large ribosomal subunit protein bL9 of Rickettsia conorii (strain ATCC VR-613 / Malish 7).